Reading from the N-terminus, the 162-residue chain is Interleukin-15 (162 aa).

Positions 1–29 (MRISKPSLRSTSIQCYLCFLLNSHLITEA) are cleaved as a signal peptide. The propeptide occupies 30-48 (GIHVFVWGCISAGLPKTEA). Disulfide bonds link Cys83-Cys133 and Cys90-Cys136. Residues Asn119 and Asn127 are each glycosylated (N-linked (GlcNAc...) asparagine).

This sequence belongs to the IL-15/IL-21 family.

Its subcellular location is the secreted. Its function is as follows. Cytokine that plays a major role in the development of inflammatory and protective immune responses to microbial invaders and parasites by modulating immune cells of both the innate and adaptive immune systems. Stimulates the proliferation of natural killer cells, T-cells and B-cells and promotes the secretion of several cytokines. In monocytes, induces the production of IL8 and monocyte chemotactic protein 1/CCL2, two chemokines that attract neutrophils and monocytes respectively to sites of infection. Unlike most cytokines, which are secreted in soluble form, IL15 is expressed in association with its high affinity IL15RA on the surface of IL15-producing cells and delivers signals to target cells that express IL2RB and IL2RG receptor subunits. Binding to its receptor triggers the phosphorylation of JAK1 and JAK3 and the recruitment and subsequent phosphorylation of signal transducer and activator of transcription-3/STAT3 and STAT5. In mast cells, induces the rapid tyrosine phosphorylation of STAT6 and thereby controls mast cell survival and release of cytokines such as IL4. This Cavia porcellus (Guinea pig) protein is Interleukin-15 (IL15).